The following is a 356-amino-acid chain: S-adenosylmethionine:tRNA ribosyltransferase-isomerase (356 aa).

This sequence belongs to the QueA family. Monomer.

It localises to the cytoplasm. The catalysed reaction is 7-aminomethyl-7-carbaguanosine(34) in tRNA + S-adenosyl-L-methionine = epoxyqueuosine(34) in tRNA + adenine + L-methionine + 2 H(+). It participates in tRNA modification; tRNA-queuosine biosynthesis. Functionally, transfers and isomerizes the ribose moiety from AdoMet to the 7-aminomethyl group of 7-deazaguanine (preQ1-tRNA) to give epoxyqueuosine (oQ-tRNA). This chain is S-adenosylmethionine:tRNA ribosyltransferase-isomerase, found in Escherichia coli O6:H1 (strain CFT073 / ATCC 700928 / UPEC).